The primary structure comprises 201 residues: Glutathione peroxidase 1 (201 aa).

At Ser32 the chain carries Phosphoserine. Sec47 is a catalytic residue. A non-standard amino acid (selenocysteine) is located at residue Sec47. N6-acetyllysine; alternate occurs at positions 86, 112, and 146. Residues Lys86, Lys112, and Lys146 each carry the N6-succinyllysine; alternate modification. Ser195 and Ser199 each carry phosphoserine.

It belongs to the glutathione peroxidase family. As to quaternary structure, homotetramer. Interacts with MIEN1. Post-translationally, during periods of oxidative stress, Sec-47 may react with a superoxide radical, irreversibly lose hydroselenide and be converted to dehydroalanine.

It localises to the cytoplasm. It is found in the mitochondrion. The enzyme catalyses 2 glutathione + H2O2 = glutathione disulfide + 2 H2O. It catalyses the reaction a hydroperoxy polyunsaturated fatty acid + 2 glutathione = a hydroxy polyunsaturated fatty acid + glutathione disulfide + H2O. It carries out the reaction tert-butyl hydroperoxide + 2 glutathione = tert-butanol + glutathione disulfide + H2O. The catalysed reaction is cumene hydroperoxide + 2 glutathione = 2-phenylpropan-2-ol + glutathione disulfide + H2O. The enzyme catalyses (13S)-hydroperoxy-(9Z,11E)-octadecadienoate + 2 glutathione = (13S)-hydroxy-(9Z,11E)-octadecadienoate + glutathione disulfide + H2O. It catalyses the reaction (9S)-hydroperoxy-(10E,12Z)-octadecadienoate + 2 glutathione = (9S)-hydroxy-(10E,12Z)-octadecadienoate + glutathione disulfide + H2O. It carries out the reaction (5S)-hydroperoxy-(6E,8Z,11Z,14Z)-eicosatetraenoate + 2 glutathione = (5S)-hydroxy-(6E,8Z,11Z,14Z)-eicosatetraenoate + glutathione disulfide + H2O. The catalysed reaction is (12S)-hydroperoxy-(5Z,8Z,10E,14Z)-eicosatetraenoate + 2 glutathione = (12S)-hydroxy-(5Z,8Z,10E,14Z)-eicosatetraenoate + glutathione disulfide + H2O. The enzyme catalyses (12R)-hydroperoxy-(5Z,8Z,10E,14Z)-eicosatetraenoate + 2 glutathione = (12R)-hydroxy-(5Z,8Z,10E,14Z)-eicosatetraenoate + glutathione disulfide + H2O. It catalyses the reaction (15S)-hydroperoxy-(5Z,8Z,11Z,13E)-eicosatetraenoate + 2 glutathione = (15S)-hydroxy-(5Z,8Z,11Z,13E)-eicosatetraenoate + glutathione disulfide + H2O. It carries out the reaction (5S)-hydroperoxy-(6E,8Z,11Z,14Z,17Z)-eicosapentaenoate + 2 glutathione = (5S)-hydroxy-(6E,8Z,11Z,14Z,17Z)-eicosapentaenoate + glutathione disulfide + H2O. The catalysed reaction is (12S)-hydroperoxy-(5Z,8Z,10E,14Z,17Z)-eicosapentaenoate + 2 glutathione = (12S)-hydroxy-(5Z,8Z,10E,14Z,17Z)-eicosapentaenoate + glutathione disulfide + H2O. The enzyme catalyses (15S)-hydroperoxy-(5Z,8Z,11Z,13E,17Z)-eicosapentaenoate + 2 glutathione = (15S)-hydroxy-(5Z,8Z,11Z,13E,17Z)-eicosapentaenoate + glutathione disulfide + H2O. It catalyses the reaction (15S)-hydroperoxy-(11Z,13E)-eicosadienoate + 2 glutathione = (15S)-hydroxy-(11Z,13E)-eicosadienoate + glutathione disulfide + H2O. It carries out the reaction (17S)-hydroperoxy-(4Z,7Z,10Z,13Z,15E,19Z)-docosahexaenoate + 2 glutathione = (17S)-hydroxy-(4Z,7Z,10Z,13Z,15E,19Z)-docosahexaenoate + glutathione disulfide + H2O. Catalyzes the reduction of hydroperoxides in a glutathione-dependent manner thus regulating cellular redox homeostasis. Can reduce small soluble hydroperoxides such as H2O2, cumene hydroperoxide and tert-butyl hydroperoxide, as well as several fatty acid-derived hydroperoxides. In platelets catalyzes the reduction of 12-hydroperoxyeicosatetraenoic acid, the primary product of the arachidonate 12-lipoxygenase pathway. The chain is Glutathione peroxidase 1 (GPX1) from Pan troglodytes (Chimpanzee).